The following is a 659-amino-acid chain: Enzymatic polyprotein (659 aa).

The interval 1-180 is protease; that stretch reads MSLRNRTNPN…FLEEGGNHVD (180 aa). Residue Asp34 is part of the active site. Residues 252–436 enclose the Reverse transcriptase domain; it reads LELKVIKPSK…EKINFLGLEI (185 aa).

This sequence belongs to the caulimoviridae enzymatic polyprotein family.

The catalysed reaction is DNA(n) + a 2'-deoxyribonucleoside 5'-triphosphate = DNA(n+1) + diphosphate. In terms of biological role, encodes for at least two polypeptides: protease (PR) and reverse transcriptase (RT). The protease processes the polyprotein in cis. Reverse transcriptase is multifunctional enzyme that converts the viral RNA genome into dsDNA in viral cytoplasmic capsids. This enzyme displays a DNA polymerase activity that can copy either DNA or RNA templates, and a ribonuclease H (RNase H) activity that cleaves the RNA strand of RNA-DNA heteroduplexes in a partially processive 3'- to 5'-endonucleasic mode. Neo-synthesized pregenomic RNA (pgRNA) are encapsidated, and reverse-transcribed inside the nucleocapsid. Partial (+)DNA is synthesized from the (-)DNA template and generates the relaxed circular DNA (RC-DNA) genome. After budding and infection, the RC-DNA migrates in the nucleus, and is converted into a plasmid-like covalently closed circular DNA (cccDNA). The polypeptide is Enzymatic polyprotein (Dianthus caryophyllus (Carnation)).